The chain runs to 249 residues: DNA polymerase sliding clamp (249 aa).

This sequence belongs to the PCNA family. As to quaternary structure, homotrimer which circularizes head-to-tail (head is a N-terminus, tail is at C-terminus) to form a toroid. RFC opens the toroid so it can load on DNA. Interacts with both Pol I (pol) and Pol II (polB-polC), with Hel308 (hjm) and with Hjc. Interaction with the C-terminal PIP-box of RfcL may stabilize the toroidal structure.

Its function is as follows. Sliding clamp subunit that acts as a moving platform for DNA processing. Responsible for tethering the catalytic subunit of DNA polymerase to DNA during high-speed replication. Unlike its eukaryotic paralog, loads on circular DNA without the replication factor C (RFC) clamp loader, although RFC greatly increases loading efficiency. Stimulates the ATPase activity of replication factor C (RFC) in the presence of ssDNA. Stimulates the helicase activity of Hel308 and may alter its substrate specificity. The chain is DNA polymerase sliding clamp from Pyrococcus furiosus (strain ATCC 43587 / DSM 3638 / JCM 8422 / Vc1).